A 499-amino-acid chain; its full sequence is GTPase Der (499 aa).

2 EngA-type G domains span residues 3–166 (PVVA…LETL) and 213–386 (IKFA…QSAT). Residues 9-16 (GRPNVGKS), 56-60 (DTGGI), 118-121 (NKTD), 219-226 (GRPNVGKS), 266-270 (DTAGV), and 331-334 (NKWD) contribute to the GTP site. Positions 387 to 471 (RRTSTAMLTR…PIRVEFQESA (85 aa)) constitute a KH-like domain. Residues 476 to 499 (GRKNTMTLSQERQRKRLLKAKTKK) are disordered. A compositionally biased stretch (basic residues) spans 488-499 (QRKRLLKAKTKK).

The protein belongs to the TRAFAC class TrmE-Era-EngA-EngB-Septin-like GTPase superfamily. EngA (Der) GTPase family. As to quaternary structure, associates with the 50S ribosomal subunit.

Functionally, GTPase that plays an essential role in the late steps of ribosome biogenesis. This is GTPase Der from Aeromonas salmonicida (strain A449).